A 97-amino-acid polypeptide reads, in one-letter code: MIKSELFERITEKKTYIPAKIIEYVVKNILEYMSLSLEKGNRIEIRGFGSFSLHYRFARIGRNPKTGEKVYLKEKYVPHFKPGKQLRDRINNIYKKI.

This sequence belongs to the bacterial histone-like protein family. Heterodimer of an alpha and a beta chain.

Functionally, this protein is one of the two subunits of integration host factor, a specific DNA-binding protein that functions in genetic recombination as well as in transcriptional and translational control. The protein is Integration host factor subunit beta of Buchnera aphidicola subsp. Cinara cedri (strain Cc).